The chain runs to 425 residues: Tumor necrosis factor receptor superfamily member 16 (425 aa).

Residues 1 to 29 (MRRAGAACSAMDRLRLLLLLILGVSSGGA) form the signal peptide. The Extracellular portion of the chain corresponds to 30–253 (KETCSTGLYT…VTRGTTDNLI (224 aa)). 4 TNFR-Cys repeats span residues 32–65 (TCSTGLYTHSGECCKACNLGEGVAQPCGANQTVC), 67–108 (PCLD…DAVC), 109–147 (RCAYGYYQDEETGHCEACSVCEVGSGLVFSCQDKQNTVC), and 149–189 (ECPE…DAEC). Intrachain disulfides connect C33-C44, C45-C58, C48-C65, C68-C84, C87-C100, C90-C108, C110-C123, C126-C139, C129-C147, C150-C165, C168-C181, and C171-C189. Residues N61 and N71 are each glycosylated (N-linked (GlcNAc...) asparagine). The interval 193–225 (PGRWIPRSTPPEGSDSTAPSTQEPEVPPEQDLV) is disordered. The segment covering 206–215 (SDSTAPSTQE) has biased composition (polar residues). A helical membrane pass occupies residues 254-274 (PVYCSILAAVVVGLVAYIAFK). Over 275–425 (RWNSCKQNKQ…CSESTATSPV (151 aa)) the chain is Cytoplasmic. Composition is skewed to polar residues over residues 282–292 (NKQGANSRPVN) and 306–327 (SGISVDSQSLHDQQTHTQTASG). Residues 282–332 (NKQGANSRPVNQTPPPEGEKLHSDSGISVDSQSLHDQQTHTQTASGQALKG) form a disordered region. S312 is modified (phosphoserine). The mediates interaction with KIDINS220 stretch occupies residues 327 to 342 (GQALKGDGNLYSSLPL). Residues 354 to 419 (GDTWRHLAGE…DIVESLCSES (66 aa)) form the Death domain.

Homodimer; disulfide-linked. Heterodimer with SORCS2. The extracellular domains of the heterodimer bind NGF. The cytoplasmic region of the heterodimer binds TRIO. NGF binding mediates dissociation of TRIO from the receptor complex. Interacts with RTN4R. Interacts with TRAF2, TRAF4 and TRAF6. Interacts with PTPN13 and RANBP9. Interacts through TRAF6 with SQSTM1 which bridges NGFR to NTRK1. Interacts with BEX1. Interacts with BEX3. Interacts with KIDINS220 and NTRK1. Can form a ternary complex with NTRK1 and KIDINS220 and this complex is affected by the expression levels of KIDINS220. An increase in KIDINS220 expression leads to a decreased association of NGFR and NTRK1. Interacts (via death domain) with RAB31. Interacts with NTRK2; may regulate the ligand specificity of the NTRK2 receptor. Interacts with LINGO1. Interacts with NRADD. Interacts with MAGED1; the interaction antagonizes the association NGFR:NTRK1. Interacts (via death domain) with ARHGDIA and RIPK2. Interacts with BFAR. In terms of processing, subject to intramembrane proteolytic cleavage by the gamma-secretase complex, giving rise to an intracellular fragment that is rapidly degraded via the proteasome. N- and O-glycosylated. Post-translationally, phosphorylated on serine residues.

The protein localises to the cell membrane. The protein resides in the cytoplasm. It localises to the perikaryon. It is found in the cell projection. Its subcellular location is the growth cone. The protein localises to the dendritic spine. Its function is as follows. Low affinity receptor which can bind to NGF, BDNF, NTF3, and NTF4. Forms a heterodimeric receptor with SORCS2 that binds the precursor forms of NGF, BDNF and NTF3 with high affinity, and has much lower affinity for mature NGF and BDNF. In response to proNGF binding, the heterodimeric receptor with SORCS2 activates a signaling cascade that leads to decreased Rac activity, reorganization of the actin cytoskeleton and neuronal growth cone collapse. Plays an important role in differentiation and survival of specific neuronal populations during development. Can mediate cell survival as well as cell death of neural cells. Plays a role in the inactivation of RHOA. Plays a role in the regulation of the translocation of GLUT4 to the cell surface in adipocytes and skeletal muscle cells in response to insulin, probably by regulating RAB31 activity, and thereby contributes to the regulation of insulin-dependent glucose uptake. Necessary for the circadian oscillation of the clock genes BMAL1, PER1, PER2 and NR1D1 in the suprachiasmatic nucleus (SCN) of the brain and in liver and of the genes involved in glucose and lipid metabolism in the liver. The chain is Tumor necrosis factor receptor superfamily member 16 (Ngfr) from Rattus norvegicus (Rat).